We begin with the raw amino-acid sequence, 491 residues long: MANYFNTLNLRQQLAQLGKCRFMARDEFADGASYLQGKKVVIVGCGAQGLNQGLNMRDSGLDISYALRKEAIAEKRASWRKATENGFKVGTYEELIPQADLVVNLTPDKQHSDVVRSVQPLMKDGAALGYSHGFNIVEVGEQIRKDITVVMVAPKCPGTEVREEYKRGFGVPTLIAVHPENDPKGEGMAIAKAWAAATGGHRAGVLESSFVAEVKSDLMGEQTILCGMLQAGSLLCFDKLVAEGTDPAYAEKLIQFGWETITEALKQGGITLMMDRLSNPAKLRAYALSEQLKEIMAPLFQKHMDDIISGEFSSGMMADWANDDKKLLTWREETGKTAFETAPQYEGKIGEQEYFDKGVLMIAMVKAGVELAFETMVASGIIEESAYYESLHELPLIANTIARKRLYEMNVVISDTAEYGNYLFSYACVPLLKEFMTTLQTGDLGTAIAEGAVDNAQLRDVNEAIRSHAIEQVGKKLRGYMTDMKRIAVAG.

A KARI N-terminal Rossmann domain is found at 15–208 (AQLGKCRFMA…GGHRAGVLES (194 aa)). Residues 45 to 48 (CGAQ), Arg-68, Arg-76, Ser-78, and 108 to 110 (DKQ) contribute to the NADP(+) site. The active site involves His-132. Residue Gly-158 coordinates NADP(+). KARI C-terminal knotted domains are found at residues 209 to 344 (SFVA…TAPQ) and 345 to 484 (YEGK…MTDM). Asp-217, Glu-221, Glu-389, and Glu-393 together coordinate Mg(2+). Position 414 (Ser-414) interacts with substrate.

The protein belongs to the ketol-acid reductoisomerase family. The cofactor is Mg(2+).

It carries out the reaction (2R)-2,3-dihydroxy-3-methylbutanoate + NADP(+) = (2S)-2-acetolactate + NADPH + H(+). The catalysed reaction is (2R,3R)-2,3-dihydroxy-3-methylpentanoate + NADP(+) = (S)-2-ethyl-2-hydroxy-3-oxobutanoate + NADPH + H(+). It functions in the pathway amino-acid biosynthesis; L-isoleucine biosynthesis; L-isoleucine from 2-oxobutanoate: step 2/4. The protein operates within amino-acid biosynthesis; L-valine biosynthesis; L-valine from pyruvate: step 2/4. Functionally, involved in the biosynthesis of branched-chain amino acids (BCAA). Catalyzes an alkyl-migration followed by a ketol-acid reduction of (S)-2-acetolactate (S2AL) to yield (R)-2,3-dihydroxy-isovalerate. In the isomerase reaction, S2AL is rearranged via a Mg-dependent methyl migration to produce 3-hydroxy-3-methyl-2-ketobutyrate (HMKB). In the reductase reaction, this 2-ketoacid undergoes a metal-dependent reduction by NADPH to yield (R)-2,3-dihydroxy-isovalerate. This chain is Ketol-acid reductoisomerase (NADP(+)), found in Klebsiella pneumoniae subsp. pneumoniae (strain ATCC 700721 / MGH 78578).